The sequence spans 339 residues: 1-aminocyclopropane-1-carboxylate deaminase (339 aa).

At Lys-52 the chain carries N6-(pyridoxal phosphate)lysine. Residue Ser-79 is the Nucleophile of the active site.

This sequence belongs to the ACC deaminase/D-cysteine desulfhydrase family. As to quaternary structure, homotrimer. It depends on pyridoxal 5'-phosphate as a cofactor.

The catalysed reaction is 1-aminocyclopropane-1-carboxylate + H2O = 2-oxobutanoate + NH4(+). Its function is as follows. Catalyzes a cyclopropane ring-opening reaction, the irreversible conversion of 1-aminocyclopropane-1-carboxylate (ACC) to ammonia and alpha-ketobutyrate. Allows growth on ACC as a nitrogen source. The protein is 1-aminocyclopropane-1-carboxylate deaminase of Rhizobium leguminosarum bv. viciae.